The primary structure comprises 211 residues: uncharacterized protein (211 aa).

This is an uncharacterized protein from Dictyostelium discoideum (Social amoeba).